A 575-amino-acid chain; its full sequence is Arginine--tRNA ligase (575 aa).

A 'HIGH' region motif is present at residues 130 to 140 (ANPTGPMHVGH).

This sequence belongs to the class-I aminoacyl-tRNA synthetase family. Monomer.

It localises to the cytoplasm. It catalyses the reaction tRNA(Arg) + L-arginine + ATP = L-arginyl-tRNA(Arg) + AMP + diphosphate. This chain is Arginine--tRNA ligase, found in Magnetococcus marinus (strain ATCC BAA-1437 / JCM 17883 / MC-1).